Consider the following 460-residue polypeptide: Tubby-related protein 3 (460 aa).

Disordered regions lie at residues K37–P132 and Y151–A193. Positions Y151–G162 are enriched in acidic residues. Low complexity predominate over residues S166–A188.

This sequence belongs to the TUB family. In terms of assembly, associates with the IFT complex A (IFT-A). Interacts with SIRT1. In terms of tissue distribution, widely expressed including eyes and adipose depots.

It is found in the nucleus. It localises to the cell membrane. Its subcellular location is the cell projection. The protein resides in the cilium. The protein localises to the cytoplasm. It is found in the secreted. In terms of biological role, negative regulator of the Shh signaling transduction pathway: recruited to primary cilia via association with the IFT complex A (IFT-A) and is required for recruitment of G protein-coupled receptor GPR161 to cilia, a promoter of PKA-dependent basal repression machinery in Shh signaling. Binds to phosphorylated inositide (phosphoinositide) lipids. Both IFT-A- and phosphoinositide-binding properties are required to regulate ciliary G protein-coupled receptor trafficking. During adipogenesis, regulates ciliary trafficking of FFAR4 in preadipocytes. In Mus musculus (Mouse), this protein is Tubby-related protein 3.